The chain runs to 217 residues: MAHSIWHEKIKSFLPEHYYGRINHFLDEAYASGLVYPPRENVFKALQVTPLEETKVLILGQDPYHGPKQAQGLSFSVPEEISAPPSLINILKELADDIGPRDHHDLSTWASQGVLLLNACLTVPAGQANGHAGLIWEPFTDAVIKVLNEKDSPVVFILWGAYARKKKAFITNPKHHIIESSHPSPLSSYRGFFGSKPFSRTNAILEKEGMTGVDWLK.

The active-site Proton acceptor is Asp-62.

The protein belongs to the uracil-DNA glycosylase (UDG) superfamily. UNG family.

The protein localises to the cytoplasm. It carries out the reaction Hydrolyzes single-stranded DNA or mismatched double-stranded DNA and polynucleotides, releasing free uracil.. Functionally, excises uracil residues from the DNA which can arise as a result of misincorporation of dUMP residues by DNA polymerase or due to deamination of cytosine. The sequence is that of Uracil-DNA glycosylase from Streptococcus pyogenes serotype M49 (strain NZ131).